A 212-amino-acid polypeptide reads, in one-letter code: Ribosomal RNA small subunit methyltransferase G (212 aa).

Residues G72, L77, 123–124 (VE), and R138 contribute to the S-adenosyl-L-methionine site.

This sequence belongs to the methyltransferase superfamily. RNA methyltransferase RsmG family.

Its subcellular location is the cytoplasm. The enzyme catalyses guanosine(527) in 16S rRNA + S-adenosyl-L-methionine = N(7)-methylguanosine(527) in 16S rRNA + S-adenosyl-L-homocysteine. Functionally, specifically methylates the N7 position of guanine in position 527 of 16S rRNA. The chain is Ribosomal RNA small subunit methyltransferase G from Histophilus somni (strain 2336) (Haemophilus somnus).